Here is a 525-residue protein sequence, read N- to C-terminus: Glucans biosynthesis protein G (525 aa).

Residues 1-35 (MIFRSVSNTDFRARVRTLLLAGSTALAFVAAPVWA) form the signal peptide.

The protein belongs to the OpgD/OpgG family.

It localises to the periplasm. The protein operates within glycan metabolism; osmoregulated periplasmic glucan (OPG) biosynthesis. Functionally, involved in the biosynthesis of osmoregulated periplasmic glucans (OPGs). This chain is Glucans biosynthesis protein G, found in Pseudomonas paraeruginosa (strain DSM 24068 / PA7) (Pseudomonas aeruginosa (strain PA7)).